A 761-amino-acid chain; its full sequence is Probable beta-galactosidase 2 (761 aa).

The N-terminal stretch at 1–23 (MGTIKNNFQLLWLILLIVVLVNG) is a signal peptide. Asn-39 and Asn-110 each carry an N-linked (GlcNAc...) asparagine glycan. The active-site Proton donor is the Glu-195. N-linked (GlcNAc...) asparagine glycosylation is present at Asn-206. Glu-267 acts as the Nucleophile in catalysis. N-linked (GlcNAc...) asparagine glycans are attached at residues Asn-385, Asn-405, Asn-438, Asn-501, Asn-552, Asn-553, Asn-577, Asn-592, Asn-642, Asn-690, and Asn-696.

It belongs to the glycosyl hydrolase 35 family.

It carries out the reaction Hydrolysis of terminal non-reducing beta-D-galactose residues in beta-D-galactosides.. In terms of biological role, cleaves beta-linked terminal galactosyl residues from gangliosides, glycoproteins, and glycosaminoglycans. The sequence is that of Probable beta-galactosidase 2 (glb2) from Dictyostelium discoideum (Social amoeba).